The sequence spans 179 residues: Protein GrpE (179 aa).

Positions 1–20 are disordered; sequence MSEETKEEIKNEKVDEEVTE.

This sequence belongs to the GrpE family. Homodimer.

It is found in the cytoplasm. In terms of biological role, participates actively in the response to hyperosmotic and heat shock by preventing the aggregation of stress-denatured proteins, in association with DnaK and GrpE. It is the nucleotide exchange factor for DnaK and may function as a thermosensor. Unfolded proteins bind initially to DnaJ; upon interaction with the DnaJ-bound protein, DnaK hydrolyzes its bound ATP, resulting in the formation of a stable complex. GrpE releases ADP from DnaK; ATP binding to DnaK triggers the release of the substrate protein, thus completing the reaction cycle. Several rounds of ATP-dependent interactions between DnaJ, DnaK and GrpE are required for fully efficient folding. This Lactococcus lactis subsp. cremoris (strain MG1363) protein is Protein GrpE.